Consider the following 196-residue polypeptide: Peptide deformylase (196 aa).

2 residues coordinate Fe cation: C103 and H145. Residue E146 is part of the active site. Residue H149 coordinates Fe cation.

Belongs to the polypeptide deformylase family. Requires Fe(2+) as cofactor.

It carries out the reaction N-terminal N-formyl-L-methionyl-[peptide] + H2O = N-terminal L-methionyl-[peptide] + formate. Removes the formyl group from the N-terminal Met of newly synthesized proteins. Requires at least a dipeptide for an efficient rate of reaction. N-terminal L-methionine is a prerequisite for activity but the enzyme has broad specificity at other positions. This Rhodococcus opacus (strain B4) protein is Peptide deformylase.